A 367-amino-acid polypeptide reads, in one-letter code: UDP-N-acetylglucosamine--N-acetylmuramyl-(pentapeptide) pyrophosphoryl-undecaprenol N-acetylglucosamine transferase (367 aa).

UDP-N-acetyl-alpha-D-glucosamine is bound by residues 13–15 (TGG), Asn127, Arg168, Ser200, Ile251, and Gln296.

Belongs to the glycosyltransferase 28 family. MurG subfamily.

The protein localises to the cell inner membrane. It catalyses the reaction di-trans,octa-cis-undecaprenyl diphospho-N-acetyl-alpha-D-muramoyl-L-alanyl-D-glutamyl-meso-2,6-diaminopimeloyl-D-alanyl-D-alanine + UDP-N-acetyl-alpha-D-glucosamine = di-trans,octa-cis-undecaprenyl diphospho-[N-acetyl-alpha-D-glucosaminyl-(1-&gt;4)]-N-acetyl-alpha-D-muramoyl-L-alanyl-D-glutamyl-meso-2,6-diaminopimeloyl-D-alanyl-D-alanine + UDP + H(+). It functions in the pathway cell wall biogenesis; peptidoglycan biosynthesis. Its function is as follows. Cell wall formation. Catalyzes the transfer of a GlcNAc subunit on undecaprenyl-pyrophosphoryl-MurNAc-pentapeptide (lipid intermediate I) to form undecaprenyl-pyrophosphoryl-MurNAc-(pentapeptide)GlcNAc (lipid intermediate II). The sequence is that of UDP-N-acetylglucosamine--N-acetylmuramyl-(pentapeptide) pyrophosphoryl-undecaprenol N-acetylglucosamine transferase from Flavobacterium psychrophilum (strain ATCC 49511 / DSM 21280 / CIP 103535 / JIP02/86).